A 104-amino-acid chain; its full sequence is Small ribosomal subunit protein bS18 (104 aa).

Positions 1-14 (MMNNEHDNFQKEVE) are enriched in basic and acidic residues. The interval 1 to 25 (MMNNEHDNFQKEVETTTETTFNREE) is disordered.

The protein belongs to the bacterial ribosomal protein bS18 family. In terms of assembly, part of the 30S ribosomal subunit. Forms a tight heterodimer with protein bS6.

In terms of biological role, binds as a heterodimer with protein bS6 to the central domain of the 16S rRNA, where it helps stabilize the platform of the 30S subunit. This chain is Small ribosomal subunit protein bS18, found in Mycoplasma pneumoniae (strain ATCC 29342 / M129 / Subtype 1) (Mycoplasmoides pneumoniae).